The primary structure comprises 223 residues: Thymidine kinase (223 aa).

ATP contacts are provided by residues 19–26 (GPMFAGKT) and 96–99 (DEVQ). Glu-97 functions as the Proton acceptor in the catalytic mechanism. Cys-153, Cys-156, Cys-191, and His-194 together coordinate Zn(2+).

This sequence belongs to the thymidine kinase family. In terms of assembly, homotetramer.

Its subcellular location is the cytoplasm. It catalyses the reaction thymidine + ATP = dTMP + ADP + H(+). In Ureaplasma urealyticum serovar 10 (strain ATCC 33699 / Western), this protein is Thymidine kinase.